Consider the following 532-residue polypeptide: 56 kDa type-specific antigen (532 aa).

Positions 1-22 are cleaved as a signal peptide; it reads MKKIMLIASAMSALSLPFSASA. A helical membrane pass occupies residues 67 to 87; that stretch reads LTTGLPFGGTLAAGMTIAPGF. Disordered stretches follow at residues 113–140 and 400–426; these read KGEI…PQPT and QQEE…SKEG. Over residues 403 to 413 the composition is skewed to basic and acidic residues; the sequence is EDAKNQGKGDC. The chain crosses the membrane as a helical span at residues 480–500; sequence TGMVASGALGVAINAAEGVCV.

It is found in the cell membrane. Its function is as follows. May be an adherent factor for rickettsial adsorption to the host-cell surface and a determinant of virulence of individual rickettsial strain. It is the major outer membrane protein. The sequence is that of 56 kDa type-specific antigen from Orientia tsutsugamushi (Rickettsia tsutsugamushi).